A 185-amino-acid polypeptide reads, in one-letter code: Meiotically up-regulated gene 5 protein (185 aa).

The protein localises to the cytoplasm. Functionally, required for correct meiotic chromosome segregation. This chain is Meiotically up-regulated gene 5 protein (mug5), found in Schizosaccharomyces pombe (strain 972 / ATCC 24843) (Fission yeast).